Consider the following 245-residue polypeptide: 1-(5-phosphoribosyl)-5-[(5-phosphoribosylamino)methylideneamino] imidazole-4-carboxamide isomerase (245 aa).

Catalysis depends on Asp-7, which acts as the Proton acceptor. The active-site Proton donor is the Asp-129.

This sequence belongs to the HisA/HisF family.

Its subcellular location is the cytoplasm. It carries out the reaction 1-(5-phospho-beta-D-ribosyl)-5-[(5-phospho-beta-D-ribosylamino)methylideneamino]imidazole-4-carboxamide = 5-[(5-phospho-1-deoxy-D-ribulos-1-ylimino)methylamino]-1-(5-phospho-beta-D-ribosyl)imidazole-4-carboxamide. It participates in amino-acid biosynthesis; L-histidine biosynthesis; L-histidine from 5-phospho-alpha-D-ribose 1-diphosphate: step 4/9. This Escherichia coli O9:H4 (strain HS) protein is 1-(5-phosphoribosyl)-5-[(5-phosphoribosylamino)methylideneamino] imidazole-4-carboxamide isomerase.